Consider the following 406-residue polypeptide: Argininosuccinate synthase (406 aa).

8 to 16 (AYSGGLDTT) is a binding site for ATP. Positions 86 and 91 each coordinate L-citrulline. Glycine 116 contributes to the ATP binding site. L-aspartate contacts are provided by threonine 118, asparagine 122, and aspartate 123. Residue asparagine 122 participates in L-citrulline binding. 5 residues coordinate L-citrulline: arginine 126, serine 175, serine 184, glutamate 261, and tyrosine 273.

The protein belongs to the argininosuccinate synthase family. Type 1 subfamily. In terms of assembly, homotetramer.

It is found in the cytoplasm. It carries out the reaction L-citrulline + L-aspartate + ATP = 2-(N(omega)-L-arginino)succinate + AMP + diphosphate + H(+). It functions in the pathway amino-acid biosynthesis; L-arginine biosynthesis; L-arginine from L-ornithine and carbamoyl phosphate: step 2/3. In Brachyspira hyodysenteriae (strain ATCC 49526 / WA1), this protein is Argininosuccinate synthase.